Consider the following 215-residue polypeptide: Cytochrome b6 (215 aa).

A helical membrane pass occupies residues 32–52; that stretch reads IFYCFGGITFTCFLVQVATGF. Position 35 (Cys35) interacts with heme c. Residues His86 and His100 each coordinate heme b. The next 3 membrane-spanning stretches (helical) occupy residues 90 to 110, 116 to 136, and 186 to 206; these read ASMMVLMMILHIFRVYLTGGF, LTWVTGVLMAVCTVSFGVTGY, and LHTFVLPLFTAVFMLMHFLMI. The heme b site is built by His187 and His202.

It belongs to the cytochrome b family. PetB subfamily. The 4 large subunits of the cytochrome b6-f complex are cytochrome b6, subunit IV (17 kDa polypeptide, PetD), cytochrome f and the Rieske protein, while the 4 small subunits are PetG, PetL, PetM and PetN. The complex functions as a dimer. It depends on heme b as a cofactor. Requires heme c as cofactor.

It is found in the plastid. The protein resides in the chloroplast thylakoid membrane. In terms of biological role, component of the cytochrome b6-f complex, which mediates electron transfer between photosystem II (PSII) and photosystem I (PSI), cyclic electron flow around PSI, and state transitions. The polypeptide is Cytochrome b6 (Auxenochlorella protothecoides (Green microalga)).